We begin with the raw amino-acid sequence, 284 residues long: Diaminopimelate epimerase (284 aa).

Substrate is bound by residues N20, Q53, and N73. The active-site Proton donor is C82. Substrate contacts are provided by residues 83-84 (GN), N167, N200, and 218-219 (ER). Catalysis depends on C227, which acts as the Proton acceptor. Residue 228-229 (GS) coordinates substrate.

This sequence belongs to the diaminopimelate epimerase family. Homodimer.

The protein resides in the cytoplasm. The catalysed reaction is (2S,6S)-2,6-diaminopimelate = meso-2,6-diaminopimelate. The protein operates within amino-acid biosynthesis; L-lysine biosynthesis via DAP pathway; DL-2,6-diaminopimelate from LL-2,6-diaminopimelate: step 1/1. In terms of biological role, catalyzes the stereoinversion of LL-2,6-diaminopimelate (L,L-DAP) to meso-diaminopimelate (meso-DAP), a precursor of L-lysine and an essential component of the bacterial peptidoglycan. This is Diaminopimelate epimerase from Xanthomonas euvesicatoria pv. vesicatoria (strain 85-10) (Xanthomonas campestris pv. vesicatoria).